Here is a 461-residue protein sequence, read N- to C-terminus: Asparagine--tRNA ligase (461 aa).

The protein belongs to the class-II aminoacyl-tRNA synthetase family. In terms of assembly, homodimer.

It localises to the cytoplasm. The catalysed reaction is tRNA(Asn) + L-asparagine + ATP = L-asparaginyl-tRNA(Asn) + AMP + diphosphate + H(+). The polypeptide is Asparagine--tRNA ligase (Nitratidesulfovibrio vulgaris (strain ATCC 29579 / DSM 644 / CCUG 34227 / NCIMB 8303 / VKM B-1760 / Hildenborough) (Desulfovibrio vulgaris)).